A 65-amino-acid chain; its full sequence is Large ribosomal subunit protein bL28 (65 aa).

Residues 1–26 (MARRDALTGKSALSGQSRSHALNATK) form a disordered region. Residues 11–22 (SALSGQSRSHAL) show a composition bias toward polar residues.

It belongs to the bacterial ribosomal protein bL28 family.

This Mycoplasma mycoides subsp. mycoides SC (strain CCUG 32753 / NCTC 10114 / PG1) protein is Large ribosomal subunit protein bL28.